Here is a 792-residue protein sequence, read N- to C-terminus: uncharacterized protein (792 aa).

361 to 362 lines the substrate pocket; it reads WD. Glutamate 488 functions as the Proton donor in the catalytic mechanism. Residue 590-591 coordinates substrate; sequence KQ. The disordered stretch occupies residues 753 to 792; that stretch reads DSPSTIAVRDRKPLLPPPSQPPGREPVSRRHKSLIISAAR. The segment covering 766–776 has biased composition (pro residues); sequence LLPPPSQPPGR.

Belongs to the glycosyl hydrolase 65 family.

This is an uncharacterized protein from Mycobacterium leprae (strain TN).